A 53-amino-acid polypeptide reads, in one-letter code: MIIEFNLLVILLVQMPLSFYMLYRLCYLLFCFLECFLNLFKKCGVFKNAKWLN.

Residues 26-46 (CYLLFCFLECFLNLFKKCGVF) traverse the membrane as a helical segment.

This sequence belongs to the plectrovirus ORF11 family.

It is found in the host membrane. This is an uncharacterized protein from Spiroplasma virus SpV1-R8A2 B (SpV1).